Reading from the N-terminus, the 616-residue chain is MLLQIAEPGQSAVPHQHKLAVGIDLGTTNSLVASVRSGEAKTLPDMKGNVILPSVVQYQEDKICVGMNAYQSAAMDPQNTIISVKRLMGRSLKDIQARYPELPYQFSESENGLPVIQTAQGEVNPIQVSSEILKSLSRRAQDTLGGELEGVVITVPAYFDDAQRAGTKDAATLAGLNVLRLLNEPTAAAIAYGLDSGQEGVIAVYDLGGGTFDISILRLSKGVFEVLATGGDSALGGDDFDHVLAQWIKEQAGITSSLSSQEQRELLTLATQTKVALSDSDNVKISFKDWSGEISVELFNSLIQPLIKKTLMACRRALKDADITSEEVMEVVMVGGSTRTPFVRTSVGDYFGQTPLTSIDPDQVVAIGAAIQADILVGNKPDSEMLLLDVIPLSLGIETMGGLVEKIIPRNTTIPVAKAQEFTTFKDGQTGMMVHVVQGEREMVEDGRSLARFSLKGIPPMAAGAAHIRVTYQVDADGLLSVTAMEKSTGVQSHIQVKPSYGLSDNEVANMLKDSMTYAKEDMQARALAEQQVEADRVIEGLVVALNNDGDALLSKEEQAEILQAIEALITLRQGTDAQAIEDGIKKADEASQEFAARRMDASIRAALAGQSIDEV.

It belongs to the heat shock protein 70 family.

Functionally, chaperone involved in the maturation of iron-sulfur cluster-containing proteins. Has a low intrinsic ATPase activity which is markedly stimulated by HscB. The chain is Chaperone protein HscA homolog from Aliivibrio fischeri (strain MJ11) (Vibrio fischeri).